We begin with the raw amino-acid sequence, 1268 residues long: Neurocan core protein (1268 aa).

The signal sequence occupies residues 1 to 22 (MGAGSVWASGLLLLWLLLLVAG). Positions 37–157 (RMLKSGSGPV…EQDLVTLEVT (121 aa)) constitute an Ig-like V-type domain. Disulfide bonds link Cys-58–Cys-139, Cys-181–Cys-252, Cys-205–Cys-226, Cys-279–Cys-354, and Cys-303–Cys-324. Asn-121 carries an N-linked (GlcNAc...) asparagine glycan. Link domains are found at residues 159–254 (VVFH…YCFA) and 258–356 (GGEV…YCFR). Asn-339 carries an N-linked (GlcNAc...) asparagine glycan. Disordered regions lie at residues 363–391 (QHGD…ELKP), 406–442 (PLMS…SWPS), 472–540 (PLGT…DQSH), and 574–630 (ISPS…LQAS). Ser-380 and Ser-410 each carry an O-linked (Xyl...) (chondroitin sulfate) serine glycan. Positions 419-430 (TWTQAPEETLGS) are enriched in polar residues. Residues 575 to 585 (SPSVPSTESTP) are compositionally biased toward low complexity. Pro residues predominate over residues 608-617 (PSEPPAPSPG). Low complexity predominate over residues 618 to 630 (PSEALSAVSLQAS). The N-linked (GlcNAc...) asparagine glycan is linked to Asn-742. The 37-residue stretch at 960–996 (PTDPCENNPCLHGGTCHTNGTVYGCSCDQGYAGENCE) folds into the EGF-like 1 domain. Cystine bridges form between Cys-964–Cys-975, Cys-969–Cys-984, Cys-986–Cys-995, Cys-1002–Cys-1013, Cys-1007–Cys-1022, Cys-1024–Cys-1033, Cys-1040–Cys-1051, Cys-1068–Cys-1160, Cys-1136–Cys-1152, Cys-1167–Cys-1210, and Cys-1196–Cys-1223. A glycan (N-linked (GlcNAc...) asparagine) is linked at Asn-978. One can recognise an EGF-like 2; calcium-binding domain in the interval 998 to 1034 (DIDDCLCSPCENGGTCIDEVNGFICLCLPSYGGSLCE). In terms of domain architecture, C-type lectin spans 1036 to 1165 (DTEGCDRGWH…LPYVCKKGTV (130 aa)). One can recognise a Sushi domain in the interval 1165 to 1225 (VLCGPPPAVE…WDRPQIMCIK (61 aa)). Asn-1175 carries N-linked (GlcNAc...) asparagine glycosylation. Basic residues predominate over residues 1228–1255 (RSHRMRRHHHHPHRHHKPRKEHRKHKRH). The interval 1228–1268 (RSHRMRRHHHHPHRHHKPRKEHRKHKRHPAEDWEKDEGDFC) is disordered.

This sequence belongs to the aggrecan/versican proteoglycan family. Post-translationally, O-glycosylated; contains chondroitin sulfate. In terms of tissue distribution, brain.

The protein localises to the secreted. Its function is as follows. May modulate neuronal adhesion and neurite growth during development by binding to neural cell adhesion molecules (NG-CAM and N-CAM). Chondroitin sulfate proteoglycan; binds to hyaluronic acid. This Mus musculus (Mouse) protein is Neurocan core protein (Ncan).